The following is a 320-amino-acid chain: o-succinylbenzoate synthase (320 aa).

Residue K133 is the Proton donor of the active site. Mg(2+) contacts are provided by D161, E190, and D213. K235 (proton acceptor) is an active-site residue.

This sequence belongs to the mandelate racemase/muconate lactonizing enzyme family. MenC type 1 subfamily. A divalent metal cation serves as cofactor.

It catalyses the reaction (1R,6R)-6-hydroxy-2-succinyl-cyclohexa-2,4-diene-1-carboxylate = 2-succinylbenzoate + H2O. It participates in quinol/quinone metabolism; 1,4-dihydroxy-2-naphthoate biosynthesis; 1,4-dihydroxy-2-naphthoate from chorismate: step 4/7. The protein operates within quinol/quinone metabolism; menaquinone biosynthesis. Converts 2-succinyl-6-hydroxy-2,4-cyclohexadiene-1-carboxylate (SHCHC) to 2-succinylbenzoate (OSB). This Escherichia coli O81 (strain ED1a) protein is o-succinylbenzoate synthase.